The primary structure comprises 514 residues: Putative thymidine phosphorylase (514 aa).

It belongs to the thymidine/pyrimidine-nucleoside phosphorylase family. Type 2 subfamily.

The catalysed reaction is thymidine + phosphate = 2-deoxy-alpha-D-ribose 1-phosphate + thymine. This is Putative thymidine phosphorylase from Rhodopseudomonas palustris (strain ATCC BAA-98 / CGA009).